The sequence spans 446 residues: tRNA wybutosine-synthesizing protein 2 homolog (446 aa).

S-adenosyl-L-methionine contacts are provided by residues S208, K215, E255, and 283 to 284 (DN).

Belongs to the class I-like SAM-binding methyltransferase superfamily. TRM5/TYW2 family.

It catalyses the reaction 4-demethylwyosine(37) in tRNA(Phe) + S-adenosyl-L-methionine = 4-demethyl-7-[(3S)-3-amino-3-carboxypropyl]wyosine(37) in tRNA(Phe) + S-methyl-5'-thioadenosine + H(+). Its pathway is tRNA modification; wybutosine-tRNA(Phe) biosynthesis. S-adenosyl-L-methionine-dependent transferase that acts as a component of the wybutosine biosynthesis pathway. Wybutosine is a hyper modified guanosine with a tricyclic base found at the 3'-position adjacent to the anticodon of eukaryotic phenylalanine tRNA. Catalyzes the transfer of the alpha-amino-alpha-carboxypropyl (acp) group from S-adenosyl-L-methionine to the C-7 position of 4-demethylwyosine (imG-14) to produce wybutosine-86. The chain is tRNA wybutosine-synthesizing protein 2 homolog (Trmt12) from Mus musculus (Mouse).